A 150-amino-acid polypeptide reads, in one-letter code: Calmodulin (150 aa).

EF-hand domains are found at residues 9 to 44 (EQIA…LGQS), 45 to 80 (PTAA…KMKD), 82 to 117 (DNEE…LGER), and 118 to 150 (LSQE…ISSK). Ca(2+) is bound by residues D22, D24, D26, N28, E33, D58, D60, N62, T64, E69, D95, D97, N99, Y101, E106, D131, D133, D135, and E142.

It belongs to the calmodulin family. In terms of assembly, interacts with rng2.

The protein localises to the cytoplasm. It localises to the cytoskeleton. The protein resides in the microtubule organizing center. It is found in the spindle pole body. In terms of biological role, calmodulin mediates the control of a large number of enzymes, ion channels and other proteins by Ca(2+). Among the enzymes to be stimulated by the calmodulin-Ca(2+) complex are a number of protein kinases and phosphatases. This is Calmodulin (cam1) from Schizosaccharomyces pombe (strain 972 / ATCC 24843) (Fission yeast).